Consider the following 169-residue polypeptide: Disulfide bond formation protein B 1 (169 aa).

The Cytoplasmic segment spans residues 1 to 13; it reads MSALLKPLDNRLF. Residues 14–30 traverse the membrane as a helical segment; the sequence is WPAVAIGGLLILAFVLY. Over 31–48 the chain is Periplasmic; the sequence is LQHVRGFAPCSLCIFIRL. A disulfide bond links Cys40 and Cys43. Residues 49 to 64 traverse the membrane as a helical segment; that stretch reads DVLGLVLAGIVGSLAP. Over 65 to 71 the chain is Cytoplasmic; sequence RSRIAGG. Residues 72–89 traverse the membrane as a helical segment; that stretch reads IAALGMLAASLGGIYHAW. The Periplasmic segment spans residues 90 to 145; the sequence is SLVAEEKLAAQGMGSCKMFMGFPEWIPLDTWLPQVFQPEGLCGEVVWTLLGQSMAV. A disulfide bond links Cys105 and Cys131. A helical membrane pass occupies residues 146-164; that stretch reads WSLALFVFCLLVLAAKLAF. Residues 165-169 lie on the Cytoplasmic side of the membrane; that stretch reads GRRTA.

It belongs to the DsbB family.

It localises to the cell inner membrane. Its function is as follows. Required for disulfide bond formation in some periplasmic proteins. Acts by oxidizing the DsbA protein. In Pseudomonas aeruginosa (strain UCBPP-PA14), this protein is Disulfide bond formation protein B 1.